We begin with the raw amino-acid sequence, 183 residues long: DELTA-miturgitoxin-Cp1c (183 aa).

Positions 1–20 are cleaved as a signal peptide; that stretch reads MKFSLFFSVFFLAVLHACLS. Positions 21-47 are excised as a propeptide; the sequence is ESEIDLEDEEHFMSSDSFLSEIQDESR. Residues 44–47 carry the Processing quadruplet motif motif; that stretch reads DESR. 8 cysteine pairs are disulfide-bonded: cysteine 51–cysteine 66, cysteine 58–cysteine 75, cysteine 65–cysteine 88, cysteine 77–cysteine 86, cysteine 115–cysteine 130, cysteine 122–cysteine 139, cysteine 129–cysteine 157, and cysteine 141–cysteine 155. The segment at 164–177 is predicted alpha-helix; sequence QAIEGALRIAKKLI. Tryptophan 181 is subject to Tryptophan amide.

The protein belongs to the neurotoxin 19 (CSTX) family. Double-CSTX subfamily. Post-translationally, cleavage of the propeptide depends on the processing quadruplet motif (XXXR, with at least one of X being E). In terms of tissue distribution, expressed by the venom gland.

It localises to the secreted. It is found in the target cell membrane. In terms of biological role, spider venom toxin that exhibits cytolytic activity by forming an alpha-helix across the membrane. Lethal to insect larvae. Causes instant paralysis and death in the larvae of the flesh fly (S.carnaria) at doses of 20 ug/g, at doses of less than 10 ug/g causes reversible paralysis. Has cytolytic activity against insect Sf9 cells. Causes stable and irreversible depolarization of fly muscle fibers, leading to contracture at higher toxin concentrations. Destabilizes membranes. The polypeptide is DELTA-miturgitoxin-Cp1c (Cheiracanthium punctorium (Yellow sac spider)).